The following is a 235-amino-acid chain: Glutathione S-transferase 1 (235 aa).

Residues 36–113 (EKYTLTYFNG…LLGGRFGLLG (78 aa)) enclose the GST N-terminal domain. Glutathione contacts are provided by residues Tyr42, Trp73, Lys77, Val85, and 97 to 98 (ES). Residues 115 to 235 (NDWEEAKIMA…WIKKRPKTYF (121 aa)) form the GST C-terminal domain.

It belongs to the GST superfamily. Homodimer.

The catalysed reaction is RX + glutathione = an S-substituted glutathione + a halide anion + H(+). This is Glutathione S-transferase 1 (GST1) from Onchocerca volvulus.